A 361-amino-acid chain; its full sequence is Inactive 2'-5'-oligoadenylate synthase 1D (361 aa).

The protein belongs to the 2-5A synthase family. Interacts with OAS1A, the interaction inhibits OAS1A catalytic activity. Expressed specifically in oocytes (at protein level). Expressed at highest level in ovary with lesser amounts in intestine, brain, thymus lung, kidney, liver and uterus.

It localises to the cytoplasm. Functionally, does not have 2'-5'-oligoadenylate synthetase activity, but can bind double-stranded RNA. May play a role in the control of female fertility, possibly by binding to and inhibiting OAS1A. The chain is Inactive 2'-5'-oligoadenylate synthase 1D from Mus musculus (Mouse).